We begin with the raw amino-acid sequence, 192 residues long: MYQQQILIELQEAQQVLNDFINDQHNLKLIQEAALLITDSFKNGGKILSCGNGGSHCDAMHFAEELTGRYRENRPGYPAIAISDPSHLSCVSNDFGYEYVFSRYVEAIGQKGDILFCLSTSGNSKNVINAIIAAKAKGMKIIAMTGKDGGKIAELADIEIRVPHFRYADRIQEIHIKVIHILMMLIEFEMAK.

Residues 37-192 (ITDSFKNGGK…MMLIEFEMAK (156 aa)) form the SIS domain. Substrate is bound at residue 52-54 (NGG). Zn(2+) contacts are provided by His61 and Glu65. Substrate contacts are provided by residues Glu65, 93–94 (ND), 119–121 (STS), Ser124, and Gln172. Residues Gln172 and His180 each contribute to the Zn(2+) site.

The protein belongs to the SIS family. GmhA subfamily. In terms of assembly, homotetramer. It depends on Zn(2+) as a cofactor.

The protein resides in the cytoplasm. It carries out the reaction 2 D-sedoheptulose 7-phosphate = D-glycero-alpha-D-manno-heptose 7-phosphate + D-glycero-beta-D-manno-heptose 7-phosphate. It functions in the pathway carbohydrate biosynthesis; D-glycero-D-manno-heptose 7-phosphate biosynthesis; D-glycero-alpha-D-manno-heptose 7-phosphate and D-glycero-beta-D-manno-heptose 7-phosphate from sedoheptulose 7-phosphate: step 1/1. Its function is as follows. Catalyzes the isomerization of sedoheptulose 7-phosphate in D-glycero-D-manno-heptose 7-phosphate. This is Phosphoheptose isomerase from Glaesserella parasuis serovar 5 (strain SH0165) (Haemophilus parasuis).